A 445-amino-acid chain; its full sequence is MAQSSTNKVSYFESVNKVLYEGKGSKNPLAFKYYNPEEIVGDKTMKEQLRFSIAYWHTFTADGTDPFGAATMQRAWDKYDGMDLAKARVEAAFQLFEKLNVPFFAFHDRDIAPEGSTLRETNKNLDVIVTMIKDYMKTSNVKLLWNTANMFTNPRFVHGAATSCNADVFAYAAAQVKKGLETAKELGAENYVFWGGREGYDTLLNTNLKLELDNLARFMQMSVDYAKEIGYTGQFLIEPKPKEPTTHQYDTDAATTISFLRQYGLENHFKLNLEANHATLAGHTFEHELRVARVQGFLGSVDANQGNPLLGWDTDEFPTNLYSTTLAMYEILQNGGLGSGGLNFDAKVRRASFEEEDLVYAHIAGMDAFARGLKVAHKLLEDRVFENIIDERYHSFRDGIGLEIVEGRANFHTLEQYALQNSIIKNQSGKQERLKAILNQYILEV.

Residues histidine 107 and aspartate 110 contribute to the active site. Residues glutamate 238, glutamate 274, histidine 277, aspartate 302, aspartate 313, aspartate 315, and aspartate 345 each coordinate Mg(2+).

The protein belongs to the xylose isomerase family. As to quaternary structure, homotetramer. Requires Mg(2+) as cofactor.

The protein localises to the cytoplasm. It carries out the reaction alpha-D-xylose = alpha-D-xylulofuranose. The polypeptide is Xylose isomerase (Bacillus cereus (strain ATCC 10987 / NRS 248)).